Reading from the N-terminus, the 623-residue chain is Cell pattern formation-associated protein stuA (623 aa).

Polar residues predominate over residues 13-31 (QHMQSAGQPQQPQTVTSGP). Positions 13–111 (QHMQSAGQPQ…DTTGQHPPPG (99 aa)) are disordered. Residues 115-221 (RVTATLWEDE…HNIGALLYHP (107 aa)) form the HTH APSES-type domain. A DNA-binding region (H-T-H motif) is located at residues 149 to 170 (GTKLLNVAGMTRGRRDGILKSE). Disordered regions lie at residues 232-270 (AAAERRKQDQGQMRTPPAGLPSIQHQPHNSMALPGPQSS) and 332-623 (ARSM…PRQR). Residues 335 to 374 (MPTTPATTPPGSMQPYGSAQSFDGSRQQMYNAPSQQSPYP) show a composition bias toward polar residues. Residues 396–408 (GPPSSRPSGSAPS) show a composition bias toward low complexity. Residues 423-446 (EHGHQSHAGEEDGEHEQHDAEYTH) are compositionally biased toward basic and acidic residues. Low complexity predominate over residues 542-553 (APPADMANPMPN). The tract at residues 569-594 (KRGREGDDDLSRPVGDVPGMDMKRRK) is nuclear localization domain. A compositionally biased stretch (basic and acidic residues) spans 570-579 (RGREGDDDLS).

Belongs to the EFG1/PHD1/stuA family.

Its subcellular location is the nucleus. Functionally, transcription factor that regulates asexual reproduction. Binds the StuA-response elements (StRE) with the consensus sequence 5'-(A/T)CGCG(T/A)N(A/C)-3' at the promoters of target genes. Controls conidiation by positively regulating the expression of brlA and abaA. Positively regulates the cephalosporin biosynthesis gene cluster. Also involved hyphal fragmentation and cell wall integrity. The chain is Cell pattern formation-associated protein stuA from Hapsidospora chrysogenum (strain ATCC 11550 / CBS 779.69 / DSM 880 / IAM 14645 / JCM 23072 / IMI 49137) (Acremonium chrysogenum).